Reading from the N-terminus, the 483-residue chain is Betaine aldehyde dehydrogenase (483 aa).

2 residues coordinate K(+): Ile27 and Asp93. 149 to 151 (GAW) provides a ligand contact to NAD(+). Lys161 functions as the Charge relay system in the catalytic mechanism. 175–178 (KPSE) contributes to the NAD(+) binding site. Val179 contacts K(+). 228-231 (SVPT) lines the NAD(+) pocket. Residue Val243 participates in K(+) binding. Residue Glu249 is the Proton acceptor of the active site. 3 residues coordinate NAD(+): Gly251, Cys283, and Glu380. Cys283 functions as the Nucleophile in the catalytic mechanism. Cys283 bears the Cysteine sulfenic acid (-SOH) mark. K(+) is bound by residues Lys450 and Gly453. Glu457 acts as the Charge relay system in catalysis.

Belongs to the aldehyde dehydrogenase family. Dimer of dimers. The cofactor is K(+).

The enzyme catalyses betaine aldehyde + NAD(+) + H2O = glycine betaine + NADH + 2 H(+). It participates in amine and polyamine biosynthesis; betaine biosynthesis via choline pathway; betaine from betaine aldehyde: step 1/1. Functionally, involved in the biosynthesis of the osmoprotectant glycine betaine. Catalyzes the irreversible oxidation of betaine aldehyde to the corresponding acid. The chain is Betaine aldehyde dehydrogenase from Cereibacter sphaeroides (strain ATCC 17029 / ATH 2.4.9) (Rhodobacter sphaeroides).